We begin with the raw amino-acid sequence, 377 residues long: Hsc70-interacting protein 2 (377 aa).

The disordered stretch occupies residues 68–123; that stretch reads AKANEPANAPEDSEDEKSLSDPESDVELDMEGVIEADSDPAQPMGNYSKKATEEEV. Serine 80 carries the phosphoserine modification. Positions 89–105 are enriched in acidic residues; the sequence is PESDVELDMEGVIEADS. 3 TPR repeats span residues 126-159, 161-193, and 195-227; these read ASELRAQAASAYGQQKFDEAIALYTKAIELSPGN, LFHAKRGQAFLKLKKPNACIRDCDVALELNSDL, and AGYKFRGRARRLLGDFELAAHDLRQACKLDFDE. The stretch at 239 to 276 forms a coiled coil; it reads NAKKIEQHRLKQERRQAERKIKERQRDQRRARKEQEKH. The span at 243-277 shows a compositional bias: basic and acidic residues; sequence IEQHRLKQERRQAERKIKERQRDQRRARKEQEKHN. 2 disordered regions span residues 243 to 302 and 344 to 377; these read IEQH…DILG and DVGAAFGQAGEKAGKPSEPKPKKDSADFVDDGLD. Gly residues predominate over residues 282 to 293; sequence GSSGEFSGGNPG. The region spanning 294–336 is the STI1 domain; sequence NGNMSDILGAMSDPEVSAAIQDILSNPGNITKYASNPKIYNLI. Over residues 355–369 the composition is skewed to basic and acidic residues; it reads KAGKPSEPKPKKDSA.

It belongs to the FAM10 family. In terms of assembly, homotetramer. Interacts with Hsc70 as well as DNAJ homologs and Hsp90.

It is found in the cytoplasm. Functionally, one HIP oligomer binds the ATPase domains of at least two Hsc70 molecules dependent on activation of the Hsc70 ATPase by Hsp40. Stabilizes the ADP state of Hsc70 that has a high affinity for substrate protein. Through its own chaperone activity, it may contribute to the interaction of Hsc70 with various target proteins. This is Hsc70-interacting protein 2 from Drosophila melanogaster (Fruit fly).